Consider the following 298-residue polypeptide: Protoheme IX farnesyltransferase (298 aa).

Helical transmembrane passes span 28–48 (VVALLLLTAVVGMCLATEELV), 50–70 (LKVLVPALTGIGLMSAAAAAI), 95–117 (LSPAKVTTFAASIGVIGFVTLYA), 121–138 (PLTAWLTFASMVGYAVVY), 149–169 (NIVIGGLAGAAPPLLGWTSVT), 176–196 (AVLLVMIIFTWTPPHFWALAV), 222–242 (CIFLYTVLLTVVCLMPFLIGM), 243–263 (TGMIYLVGVSVLNAIFLAYAW), and 274–294 (AFNMFAFSIWHLMLLFVILLV).

This sequence belongs to the UbiA prenyltransferase family. Protoheme IX farnesyltransferase subfamily.

Its subcellular location is the cell inner membrane. It carries out the reaction heme b + (2E,6E)-farnesyl diphosphate + H2O = Fe(II)-heme o + diphosphate. It participates in porphyrin-containing compound metabolism; heme O biosynthesis; heme O from protoheme: step 1/1. In terms of biological role, converts heme B (protoheme IX) to heme O by substitution of the vinyl group on carbon 2 of heme B porphyrin ring with a hydroxyethyl farnesyl side group. The chain is Protoheme IX farnesyltransferase from Idiomarina loihiensis (strain ATCC BAA-735 / DSM 15497 / L2-TR).